Consider the following 247-residue polypeptide: 3-deoxy-manno-octulosonate cytidylyltransferase (247 aa).

This sequence belongs to the KdsB family.

Its subcellular location is the cytoplasm. It carries out the reaction 3-deoxy-alpha-D-manno-oct-2-ulosonate + CTP = CMP-3-deoxy-beta-D-manno-octulosonate + diphosphate. It participates in nucleotide-sugar biosynthesis; CMP-3-deoxy-D-manno-octulosonate biosynthesis; CMP-3-deoxy-D-manno-octulosonate from 3-deoxy-D-manno-octulosonate and CTP: step 1/1. The protein operates within bacterial outer membrane biogenesis; lipopolysaccharide biosynthesis. Its function is as follows. Activates KDO (a required 8-carbon sugar) for incorporation into bacterial lipopolysaccharide in Gram-negative bacteria. The chain is 3-deoxy-manno-octulosonate cytidylyltransferase from Chlorobium phaeobacteroides (strain DSM 266 / SMG 266 / 2430).